The primary structure comprises 69 residues: UPF0337 protein YjbJ (69 aa).

It belongs to the UPF0337 (CsbD) family.

This is UPF0337 protein YjbJ (yjbJ) from Escherichia coli O157:H7.